Consider the following 160-residue polypeptide: Transcription elongation factor GreA (160 aa).

A coiled-coil region spans residues 14-76; that stretch reads VKKLEEELEY…QLENMLKNAS (63 aa).

This sequence belongs to the GreA/GreB family.

Necessary for efficient RNA polymerase transcription elongation past template-encoded arresting sites. The arresting sites in DNA have the property of trapping a certain fraction of elongating RNA polymerases that pass through, resulting in locked ternary complexes. Cleavage of the nascent transcript by cleavage factors such as GreA or GreB allows the resumption of elongation from the new 3'terminus. GreA releases sequences of 2 to 3 nucleotides. The chain is Transcription elongation factor GreA from Clostridium botulinum (strain Okra / Type B1).